We begin with the raw amino-acid sequence, 159 residues long: NADH-quinone oxidoreductase subunit B (159 aa).

[4Fe-4S] cluster contacts are provided by C32, C33, C97, and C126.

This sequence belongs to the complex I 20 kDa subunit family. In terms of assembly, NDH-1 is composed of 14 different subunits. Subunits NuoB, C, D, E, F, and G constitute the peripheral sector of the complex. It depends on [4Fe-4S] cluster as a cofactor.

It localises to the cell inner membrane. It catalyses the reaction a quinone + NADH + 5 H(+)(in) = a quinol + NAD(+) + 4 H(+)(out). In terms of biological role, NDH-1 shuttles electrons from NADH, via FMN and iron-sulfur (Fe-S) centers, to quinones in the respiratory chain. The immediate electron acceptor for the enzyme in this species is believed to be ubiquinone. Couples the redox reaction to proton translocation (for every two electrons transferred, four hydrogen ions are translocated across the cytoplasmic membrane), and thus conserves the redox energy in a proton gradient. This chain is NADH-quinone oxidoreductase subunit B, found in Helicobacter pylori (strain HPAG1).